A 108-amino-acid chain; its full sequence is Phosphoribosyl-AMP cyclohydrolase (108 aa).

Aspartate 78 is a binding site for Mg(2+). Cysteine 79 lines the Zn(2+) pocket. Residues aspartate 80 and aspartate 82 each coordinate Mg(2+). The Zn(2+) site is built by cysteine 95 and cysteine 102.

The protein belongs to the PRA-CH family. In terms of assembly, homodimer. It depends on Mg(2+) as a cofactor. Requires Zn(2+) as cofactor.

It is found in the cytoplasm. The enzyme catalyses 1-(5-phospho-beta-D-ribosyl)-5'-AMP + H2O = 1-(5-phospho-beta-D-ribosyl)-5-[(5-phospho-beta-D-ribosylamino)methylideneamino]imidazole-4-carboxamide. The protein operates within amino-acid biosynthesis; L-histidine biosynthesis; L-histidine from 5-phospho-alpha-D-ribose 1-diphosphate: step 3/9. Catalyzes the hydrolysis of the adenine ring of phosphoribosyl-AMP. The sequence is that of Phosphoribosyl-AMP cyclohydrolase from Cenarchaeum symbiosum (strain A).